Here is a 21-residue protein sequence, read N- to C-terminus: Granulitoxin (21 aa).

The segment at 1-21 (AKTGILDSDGPTVAGNSLSGT) is disordered.

It is found in the secreted. Its subcellular location is the nematocyst. Functionally, injection into mice produces severe neurotoxic effects such as circular movements, aggressive behavior, dyspnea, tonic-clonic convulsion and death. The protein is Granulitoxin of Bunodosoma cangicum (Sea anemone).